The primary structure comprises 1593 residues: DNA-directed RNA polymerase subunit beta' (1593 aa).

Residues Cys74, Cys76, Cys89, and Cys92 each contribute to the Zn(2+) site. The Mg(2+) site is built by Asp648, Asp650, and Asp652. Zn(2+) is bound by residues Cys1026, Cys1100, Cys1107, and Cys1110.

It belongs to the RNA polymerase beta' chain family. The RNAP catalytic core consists of 2 alpha, 1 beta, 1 beta' and 1 omega subunit. When a sigma factor is associated with the core the holoenzyme is formed, which can initiate transcription. It depends on Mg(2+) as a cofactor. Zn(2+) serves as cofactor.

The enzyme catalyses RNA(n) + a ribonucleoside 5'-triphosphate = RNA(n+1) + diphosphate. DNA-dependent RNA polymerase catalyzes the transcription of DNA into RNA using the four ribonucleoside triphosphates as substrates. This is DNA-directed RNA polymerase subunit beta' from Endomicrobium trichonymphae.